Reading from the N-terminus, the 360-residue chain is Peptide chain release factor 1 (360 aa).

Glutamine 233 is modified (N5-methylglutamine). The interval 283 to 305 (KLDAERAADRRSQVGSGDRSERI) is disordered.

This sequence belongs to the prokaryotic/mitochondrial release factor family. Methylated by PrmC. Methylation increases the termination efficiency of RF1.

It is found in the cytoplasm. Functionally, peptide chain release factor 1 directs the termination of translation in response to the peptide chain termination codons UAG and UAA. In Methylocella silvestris (strain DSM 15510 / CIP 108128 / LMG 27833 / NCIMB 13906 / BL2), this protein is Peptide chain release factor 1.